The sequence spans 177 residues: Isopentenyl-diphosphate Delta-isomerase 2 (177 aa).

Mn(2+) contacts are provided by His24 and His30. The region spanning 28–160 is the Nudix hydrolase domain; the sequence is MLHRAFSIFV…PDVYTVWFKK (133 aa). Cys65 is a catalytic residue. Cys65 contributes to the Mg(2+) binding site. Residue His67 coordinates Mn(2+). Glu85 is a binding site for Mg(2+). Mn(2+) is bound by residues Glu110 and Glu112. Glu112 is a catalytic residue.

This sequence belongs to the IPP isomerase type 1 family. In terms of assembly, homodimer. Requires Mg(2+) as cofactor. Mn(2+) serves as cofactor.

Its subcellular location is the cytoplasm. The enzyme catalyses isopentenyl diphosphate = dimethylallyl diphosphate. Its pathway is isoprenoid biosynthesis; dimethylallyl diphosphate biosynthesis; dimethylallyl diphosphate from isopentenyl diphosphate: step 1/1. In terms of biological role, catalyzes the 1,3-allylic rearrangement of the homoallylic substrate isopentenyl (IPP) to its highly electrophilic allylic isomer, dimethylallyl diphosphate (DMAPP). This is Isopentenyl-diphosphate Delta-isomerase 2 from Photorhabdus laumondii subsp. laumondii (strain DSM 15139 / CIP 105565 / TT01) (Photorhabdus luminescens subsp. laumondii).